A 101-amino-acid polypeptide reads, in one-letter code: Urease subunit beta (101 aa).

The protein belongs to the urease beta subunit family. Heterotrimer of UreA (gamma), UreB (beta) and UreC (alpha) subunits. Three heterotrimers associate to form the active enzyme.

It localises to the cytoplasm. It catalyses the reaction urea + 2 H2O + H(+) = hydrogencarbonate + 2 NH4(+). It functions in the pathway nitrogen metabolism; urea degradation; CO(2) and NH(3) from urea (urease route): step 1/1. The chain is Urease subunit beta from Variovorax paradoxus (strain S110).